The primary structure comprises 65 residues: Large ribosomal subunit protein bL32 (65 aa).

It belongs to the bacterial ribosomal protein bL32 family.

This is Large ribosomal subunit protein bL32 from Metamycoplasma arthritidis (strain 158L3-1) (Mycoplasma arthritidis).